The following is a 150-amino-acid chain: MKVIFLADVKGKGKKGEIKEVPTGYAQNFLIKKNLAKEATSQSIGELKGKQKAEEKAQAEILAEAQAVKAVLDEDKTRVQFQEKVGPDGRTFGSITAKKISEELQKQFGVKVDKRHIVLDHPIRAIGLIEVPVKLHKELTAEIKLAITEA.

The protein belongs to the bacterial ribosomal protein bL9 family.

Its function is as follows. Binds to the 23S rRNA. This chain is Large ribosomal subunit protein bL9, found in Streptococcus pyogenes serotype M18 (strain MGAS8232).